Reading from the N-terminus, the 247-residue chain is ATP synthase subunit a, chloroplastic (247 aa).

5 helical membrane-spanning segments follow: residues 38–58, 95–115, 134–154, 199–219, and 220–240; these read QVLITSWFVITILLGSVIIAV, VPFIGTMFLFIFVSNWSGALL, INTTVALALLTSAAYFYAGLS, LVVVVLVSLVPLVVPIPVMFL, and GLFTSGIQALIFATLAAAYIG.

The protein belongs to the ATPase A chain family. As to quaternary structure, F-type ATPases have 2 components, CF(1) - the catalytic core - and CF(0) - the membrane proton channel. CF(1) has five subunits: alpha(3), beta(3), gamma(1), delta(1), epsilon(1). CF(0) has four main subunits: a, b, b' and c.

It is found in the plastid. Its subcellular location is the chloroplast thylakoid membrane. Functionally, key component of the proton channel; it plays a direct role in the translocation of protons across the membrane. The polypeptide is ATP synthase subunit a, chloroplastic (Sorghum bicolor (Sorghum)).